The following is a 312-amino-acid chain: Aspartate carbamoyltransferase catalytic subunit (312 aa).

2 residues coordinate carbamoyl phosphate: Arg58 and Thr59. Lys86 is a binding site for L-aspartate. Residues Arg108, His136, and Gln139 each contribute to the carbamoyl phosphate site. The L-aspartate site is built by Arg169 and Arg223. Residues Gly264 and Pro265 each coordinate carbamoyl phosphate.

This sequence belongs to the aspartate/ornithine carbamoyltransferase superfamily. ATCase family. Heterododecamer (2C3:3R2) of six catalytic PyrB chains organized as two trimers (C3), and six regulatory PyrI chains organized as three dimers (R2).

It carries out the reaction carbamoyl phosphate + L-aspartate = N-carbamoyl-L-aspartate + phosphate + H(+). It participates in pyrimidine metabolism; UMP biosynthesis via de novo pathway; (S)-dihydroorotate from bicarbonate: step 2/3. Catalyzes the condensation of carbamoyl phosphate and aspartate to form carbamoyl aspartate and inorganic phosphate, the committed step in the de novo pyrimidine nucleotide biosynthesis pathway. The polypeptide is Aspartate carbamoyltransferase catalytic subunit (Syntrophomonas wolfei subsp. wolfei (strain DSM 2245B / Goettingen)).